We begin with the raw amino-acid sequence, 121 residues long: Large ribosomal subunit protein eL34B (121 aa).

This sequence belongs to the eukaryotic ribosomal protein eL34 family. As to quaternary structure, component of the large ribosomal subunit (LSU). Mature yeast ribosomes consist of a small (40S) and a large (60S) subunit. The 40S small subunit contains 1 molecule of ribosomal RNA (18S rRNA) and 33 different proteins (encoded by 57 genes). The large 60S subunit contains 3 rRNA molecules (25S, 5.8S and 5S rRNA) and 46 different proteins (encoded by 81 genes).

The protein resides in the cytoplasm. Functionally, component of the ribosome, a large ribonucleoprotein complex responsible for the synthesis of proteins in the cell. The small ribosomal subunit (SSU) binds messenger RNAs (mRNAs) and translates the encoded message by selecting cognate aminoacyl-transfer RNA (tRNA) molecules. The large subunit (LSU) contains the ribosomal catalytic site termed the peptidyl transferase center (PTC), which catalyzes the formation of peptide bonds, thereby polymerizing the amino acids delivered by tRNAs into a polypeptide chain. The nascent polypeptides leave the ribosome through a tunnel in the LSU and interact with protein factors that function in enzymatic processing, targeting, and the membrane insertion of nascent chains at the exit of the ribosomal tunnel. This chain is Large ribosomal subunit protein eL34B, found in Saccharomyces cerevisiae (strain ATCC 204508 / S288c) (Baker's yeast).